A 222-amino-acid chain; its full sequence is E3 ubiquitin-protein ligase RNF138 (222 aa).

The RING-type zinc finger occupies 17 to 57 (CPVCQEILQTPVRTQTCRHVFCRKCFMLAMKSGGAYCPLCR). Cys-85, Cys-88, His-100, and Cys-104 together coordinate Zn(2+). The C2HC RNF-type zinc-finger motif lies at 85–104 (CMYCGKMMKLHYMKLHYKSC). 2 C2H2-type zinc fingers span residues 134–157 (YKCPLCSEHNLNQRSLLEHCNNVH) and 164–192 (MVCPICATLPWGDPIQTTGNVIAHLNARH). In terms of domain architecture, UIM spans 202–220 (INIDEEAQFQIAVANSYKI).

As to quaternary structure, interacts with nlk.2 (via C-terminus) and ube2k. In terms of processing, auto-ubiquitinated.

It localises to the chromosome. The enzyme catalyses S-ubiquitinyl-[E2 ubiquitin-conjugating enzyme]-L-cysteine + [acceptor protein]-L-lysine = [E2 ubiquitin-conjugating enzyme]-L-cysteine + N(6)-ubiquitinyl-[acceptor protein]-L-lysine.. The protein operates within protein modification; protein ubiquitination. In terms of biological role, E3 ubiquitin-protein ligase involved in DNA damage response by promoting DNA resection and homologous recombination. Recruited to sites of double-strand breaks following DNA damage and specifically promotes double-strand break repair via homologous recombination. Together with nlk.2, involved in the ubiquitination and degradation of TCF/LEF. Also exhibits auto-ubiquitination activity in combination with ube2k. May act as a negative regulator in the Wnt/beta-catenin-mediated signaling pathway. This chain is E3 ubiquitin-protein ligase RNF138 (rnf138), found in Xenopus laevis (African clawed frog).